The primary structure comprises 690 residues: Wilms tumor protein 1-interacting protein homolog (690 aa).

Disordered regions lie at residues 151–316 (MSAT…VSPR) and 328–372 (TLGS…PRSS). A compositionally biased stretch (low complexity) spans 152–186 (SATSPRSSMASSASSSQEHSKYSSPRSSISSNALS). 4 stretches are compositionally biased toward polar residues: residues 204-214 (EKYTSPRSSLG), 223-233 (PRSSYASTTSD), 240-261 (PRASLTSYDCGSKPSSNRTSGI), and 272-292 (PRSSTASQYSCTTSPRSSYSD). The span at 335–357 (SVVSPRSSISSHSSRSSRSSRGS) shows a compositional bias: low complexity. LIM zinc-binding domains follow at residues 479 to 540 (GICI…SGFQ), 544 to 603 (DKCF…TVFA), and 604 to 673 (PKCA…RLSV).

The protein belongs to the zyxin/ajuba family. As to quaternary structure, interacts with prickle3.

It localises to the cell junction. It is found in the adherens junction. The protein resides in the nucleus. May monitor slit diaphragm protein assembly, a specialized adherens junction characteristic of podocytes. In case of podocyte injury, it shuttles into the nucleus and acts as a transcription regulator. Plays a role in the regulation of cell morphology and cytoskeletal organization. Acts as a transcriptional corepressor for snai1 and snai2/slug and plays a role in regulating neural crest development. Involved in the organization of the basal body. Involved in cilia growth and positioning. This Xenopus laevis (African clawed frog) protein is Wilms tumor protein 1-interacting protein homolog (wtip).